The sequence spans 107 residues: Antimicrobial peptide damicornin (107 aa).

The N-terminal stretch at 1 to 22 is a signal peptide; it reads MKVLVILFGAMLVLMEFQKASA. A propeptide spanning residues 23-67 is cleaved from the precursor; that stretch reads ATLLEDFDDDDDLLDDGGDFDLEANSDASSGNGNDSNDAVPEKRR. Acidic residues predominate over residues 37–46; the sequence is DDGGDFDLEA. Positions 37–62 are disordered; sequence DDGGDFDLEANSDASSGNGNDSNDAV. Positions 47-61 are enriched in low complexity; it reads NSDASSGNGNDSNDA. 3 cysteine pairs are disulfide-bonded: cysteine 69-cysteine 105, cysteine 78-cysteine 99, and cysteine 85-cysteine 103. Arginine amide is present on arginine 106.

The protein belongs to the coral AMP family. As to expression, is specifically expressed in the granular cells of the ectoderm.

It localises to the cytoplasm. It is found in the stress granule. The protein localises to the secreted. In terms of biological role, cationic peptide with probable antimicrobial activity against coral pathogens. Shows in vitro activity against Gram-positive bacteria and the filamentous fungus F.oxysporum (MIC=1.25 uM). Gram-positive bacteria tested are B.megaterium (MIC=20 uM), S.aureus (MIC=5 uM), M. luteus (MIC=1.25 uM), B.stationis (MIC=10 uM), M.maritypicum (MIC=20 uM). Has no or little effect against Gram-negative bacteria (the coral pathogen V.coralliilyticus (MIC&gt;20 uM), V.aesturianus (MIC&gt;20 uM), V.shiloi (MIC&gt;20 uM), and E.coli (MIC=10 uM)). Has no hemolytic activity against sheep erythrocytes. The sequence is that of Antimicrobial peptide damicornin from Pocillopora damicornis (Cauliflower coral).